A 339-amino-acid chain; its full sequence is N-acetyl-gamma-glutamyl-phosphate reductase (339 aa).

The active site involves Cys-145.

Belongs to the NAGSA dehydrogenase family. Type 1 subfamily.

The protein localises to the cytoplasm. The catalysed reaction is N-acetyl-L-glutamate 5-semialdehyde + phosphate + NADP(+) = N-acetyl-L-glutamyl 5-phosphate + NADPH + H(+). The protein operates within amino-acid biosynthesis; L-arginine biosynthesis; N(2)-acetyl-L-ornithine from L-glutamate: step 3/4. In terms of biological role, catalyzes the NADPH-dependent reduction of N-acetyl-5-glutamyl phosphate to yield N-acetyl-L-glutamate 5-semialdehyde. The polypeptide is N-acetyl-gamma-glutamyl-phosphate reductase (Thermotoga maritima (strain ATCC 43589 / DSM 3109 / JCM 10099 / NBRC 100826 / MSB8)).